The chain runs to 946 residues: Bifunctional glutamine synthetase adenylyltransferase/adenylyl-removing enzyme (946 aa).

Residues Met-1 to Glu-440 are adenylyl removase. An adenylyl transferase region spans residues Ser-449–Glu-946.

It belongs to the GlnE family. Mg(2+) serves as cofactor.

It catalyses the reaction [glutamine synthetase]-O(4)-(5'-adenylyl)-L-tyrosine + phosphate = [glutamine synthetase]-L-tyrosine + ADP. The catalysed reaction is [glutamine synthetase]-L-tyrosine + ATP = [glutamine synthetase]-O(4)-(5'-adenylyl)-L-tyrosine + diphosphate. Involved in the regulation of glutamine synthetase GlnA, a key enzyme in the process to assimilate ammonia. When cellular nitrogen levels are high, the C-terminal adenylyl transferase (AT) inactivates GlnA by covalent transfer of an adenylyl group from ATP to specific tyrosine residue of GlnA, thus reducing its activity. Conversely, when nitrogen levels are low, the N-terminal adenylyl removase (AR) activates GlnA by removing the adenylyl group by phosphorolysis, increasing its activity. The regulatory region of GlnE binds the signal transduction protein PII (GlnB) which indicates the nitrogen status of the cell. The polypeptide is Bifunctional glutamine synthetase adenylyltransferase/adenylyl-removing enzyme (Escherichia coli O127:H6 (strain E2348/69 / EPEC)).